The chain runs to 439 residues: Lactamase-like protein nscB (439 aa).

Zn(2+)-binding residues include His-214, His-216, Asp-218, and His-219. Catalysis depends on Asp-218, which acts as the Proton donor/acceptor.

The protein belongs to the metallo-beta-lactamase superfamily. The cofactor is Zn(2+).

It functions in the pathway secondary metabolite biosynthesis. Lactamase-like protein; part of the gene cluster that mediates the biosynthesis of neosartoricin B, a prenylated anthracenone that probably exhibits T-cell antiproliferative activity, suggestive of a physiological role as an immunosuppressive agent. The non-reducing polyketide synthase nscA probably synthesizes and cyclizes the decaketide backbone. The hydrolase nscB then mediates the product release through hydrolysis followed by spontaneous decarboxylation. The prenyltransferase nscD catalyzes the addition of the dimethylallyl group to the aromatic C5. The FAD-dependent monooxygenase nscC is then responsible for the stereospecific hydroxylation at C2. Neosartoricin B can be converted into two additional compounds neosartoricins C and D. Neosartoricin C is a spirocyclic compound that is cyclized through the attack of C3 hydroxyl on C14, followed by dehydration. On the other hand, neosartoricin D is a further cyclized compound in which attack of C2 on C14 in neosartoricin C results in the formation of the acetal-containing dioxabicyclo-octanone ring. Both of these compounds are novel and possibly represent related metabolites of the gene cluster. This chain is Lactamase-like protein nscB, found in Arthroderma benhamiae (strain ATCC MYA-4681 / CBS 112371) (Trichophyton mentagrophytes).